The sequence spans 439 residues: Glutamyl-tRNA reductase (439 aa).

Substrate-binding positions include 48–51 (TCNR), S107, 112–114 (EPQ), and Q118. C49 functions as the Nucleophile in the catalytic mechanism. Residue 187-192 (GAGEMA) coordinates NADP(+).

This sequence belongs to the glutamyl-tRNA reductase family. Homodimer.

The catalysed reaction is (S)-4-amino-5-oxopentanoate + tRNA(Glu) + NADP(+) = L-glutamyl-tRNA(Glu) + NADPH + H(+). The protein operates within porphyrin-containing compound metabolism; protoporphyrin-IX biosynthesis; 5-aminolevulinate from L-glutamyl-tRNA(Glu): step 1/2. In terms of biological role, catalyzes the NADPH-dependent reduction of glutamyl-tRNA(Glu) to glutamate 1-semialdehyde (GSA). This is Glutamyl-tRNA reductase from Maridesulfovibrio salexigens (strain ATCC 14822 / DSM 2638 / NCIMB 8403 / VKM B-1763) (Desulfovibrio salexigens).